The chain runs to 126 residues: Aspartate 1-decarboxylase (126 aa).

S25 (schiff-base intermediate with substrate; via pyruvic acid) is an active-site residue. S25 is subject to Pyruvic acid (Ser). T57 serves as a coordination point for substrate. The active-site Proton donor is the Y58. 73–75 contacts substrate; it reads GAA.

It belongs to the PanD family. In terms of assembly, heterooctamer of four alpha and four beta subunits. Pyruvate serves as cofactor. In terms of processing, is synthesized initially as an inactive proenzyme, which is activated by self-cleavage at a specific serine bond to produce a beta-subunit with a hydroxyl group at its C-terminus and an alpha-subunit with a pyruvoyl group at its N-terminus.

It localises to the cytoplasm. The catalysed reaction is L-aspartate + H(+) = beta-alanine + CO2. It functions in the pathway cofactor biosynthesis; (R)-pantothenate biosynthesis; beta-alanine from L-aspartate: step 1/1. Catalyzes the pyruvoyl-dependent decarboxylation of aspartate to produce beta-alanine. The chain is Aspartate 1-decarboxylase from Pectobacterium carotovorum subsp. carotovorum (strain PC1).